Reading from the N-terminus, the 518-residue chain is Sensor protein kinase HptS (518 aa).

A run of 2 helical transmembrane segments spans residues 20-40 (IFPVFLVIIIGLVSFYAIYIW) and 222-242 (GITLLIVMAVVLVLLVIFGFI). In terms of domain architecture, Histidine kinase spans 297–513 (EQLIHSIEHT…LICYKIPLSR (217 aa)). Histidine 325 is modified (phosphohistidine; by autocatalysis).

Post-translationally, autophosphorylated.

The protein resides in the cell membrane. The catalysed reaction is ATP + protein L-histidine = ADP + protein N-phospho-L-histidine.. Functionally, member of the two-component regulatory system HptS/HptR that regulates genes involved in hexose phosphate transport system in response to changes in extracellular phosphate sources. May act as a sensor protein kinase which is autophosphorylated at a histidine residue and transfers its phosphate group to the conserved aspartic acid residue in the regulatory domain of HptS. In turn, HptS antagonizes CcpA-dependent transcription of a subset of CcpA-regulated genes involved in antibiotic susceptibility. In Staphylococcus aureus (strain bovine RF122 / ET3-1), this protein is Sensor protein kinase HptS (hptS).